The following is a 293-amino-acid chain: NAD kinase (293 aa).

The active-site Proton acceptor is the Asp-74. NAD(+) is bound by residues 74 to 75 (DG), 148 to 149 (NE), His-159, Arg-176, Asp-178, Thr-186, 189 to 194 (TAYSLS), and Gln-248.

This sequence belongs to the NAD kinase family. In terms of assembly, homodimer. The cofactor is a divalent metal cation.

Its subcellular location is the cytoplasm. It carries out the reaction NAD(+) + ATP = ADP + NADP(+) + H(+). Functionally, involved in the regulation of the intracellular balance of NAD and NADP, and is a key enzyme in the biosynthesis of NADP. Catalyzes specifically the phosphorylation on 2'-hydroxyl of the adenosine moiety of NAD to yield NADP. The chain is NAD kinase from Yersinia pestis.